Here is a 74-residue protein sequence, read N- to C-terminus: Omega-conotoxin-like protein 1 (74 aa).

Positions 1 to 20 are cleaved as a signal peptide; it reads MSKFILLVCILLLTTNIVSA. Cystine bridges form between C24/C38, C31/C43, and C37/C50.

As to expression, highly expressed in brain. Is also found in hemolymph.

Functionally, the impact of this protein on the neuronal activity of the honeybee brain is not known. It does not affect apparent movement or hatching of blowfly larvae. However, when injected into fish, it induces a strong reversible paralytic effect. In addition, the presence of this small peptide in the hemolymph of adult drones together with its induction after bacterial infection suggests that this peptide exhibits antibacterial activity. This peptide may act by inhibiting ion channels. This chain is Omega-conotoxin-like protein 1, found in Apis mellifera (Honeybee).